A 600-amino-acid polypeptide reads, in one-letter code: Elongation factor 4 (600 aa).

Positions 5–187 constitute a tr-type G domain; that stretch reads KYIRNFSIIA…AIINKLPSPK (183 aa). Residues 17–22 and 134–137 each bind GTP; these read DHGKST and NKID.

Belongs to the TRAFAC class translation factor GTPase superfamily. Classic translation factor GTPase family. LepA subfamily.

Its subcellular location is the cell inner membrane. It catalyses the reaction GTP + H2O = GDP + phosphate + H(+). Required for accurate and efficient protein synthesis under certain stress conditions. May act as a fidelity factor of the translation reaction, by catalyzing a one-codon backward translocation of tRNAs on improperly translocated ribosomes. Back-translocation proceeds from a post-translocation (POST) complex to a pre-translocation (PRE) complex, thus giving elongation factor G a second chance to translocate the tRNAs correctly. Binds to ribosomes in a GTP-dependent manner. The polypeptide is Elongation factor 4 (Rickettsia typhi (strain ATCC VR-144 / Wilmington)).